Consider the following 82-residue polypeptide: MRIKARIGVENSLTDVQQALKQQGHEVVTLNSEQDAQGCDCCVVTGQDSNMMGIADASIKGSVITAHGLTTDDICQQVESRT.

Belongs to the UPF0180 family.

This is UPF0180 protein BAA_1480 from Bacillus anthracis (strain A0248).